Here is a 345-residue protein sequence, read N- to C-terminus: MAITYDTYEDLWEHSEVLEGVHEVLSEVAEVDGVPAISEAFLRGIDEDRGHKHVVAMNGDRVAGVLAIDPDRVIELAVAPEVRHSRVGIALFEALRDQLGVSGGIDVWAHGDSAGAQRFVESLDARRTRELLKMSVDCPPATKAAKAMEAGGAEAEKRCAEQDFEVLSYTESVARFDADSVDAEWVRINNEAFAWHPEQGGWDVDYLRSARDTNWFDPDGVLMLWVRDENSAAERVGIPCAANGGEGNDDVFRLVGFHWTKIPLEEKEKDAGERTGEVYVVCLADDARGRGLGQAITQLGMKSLLENGCGRIELYVEGDNAPAVSTYKRLGFEVVHTDVVYRGRL.

N-acetyltransferase domains lie at Asp-6–Glu-149 and Phe-164–Leu-345. Residue Glu-39 coordinates 1D-myo-inositol 2-(L-cysteinylamino)-2-deoxy-alpha-D-glucopyranoside. Acetyl-CoA is bound at residue Leu-76–Val-78. Residues Glu-198, Lys-261, and Glu-277 each coordinate 1D-myo-inositol 2-(L-cysteinylamino)-2-deoxy-alpha-D-glucopyranoside. Residues Val-281–Leu-283 and Arg-288–Gln-294 each bind acetyl-CoA. A 1D-myo-inositol 2-(L-cysteinylamino)-2-deoxy-alpha-D-glucopyranoside-binding site is contributed by Tyr-315.

This sequence belongs to the acetyltransferase family. MshD subfamily. Monomer.

The enzyme catalyses 1D-myo-inositol 2-(L-cysteinylamino)-2-deoxy-alpha-D-glucopyranoside + acetyl-CoA = mycothiol + CoA + H(+). Functionally, catalyzes the transfer of acetyl from acetyl-CoA to desacetylmycothiol (Cys-GlcN-Ins) to form mycothiol. This is Mycothiol acetyltransferase from Corynebacterium jeikeium (strain K411).